A 209-amino-acid chain; its full sequence is Ribosomal RNA large subunit methyltransferase E (209 aa).

S-adenosyl-L-methionine is bound by residues Gly63, Trp65, Asp83, Asp99, and Asp124. The active-site Proton acceptor is the Lys164.

It belongs to the class I-like SAM-binding methyltransferase superfamily. RNA methyltransferase RlmE family.

It localises to the cytoplasm. The enzyme catalyses uridine(2552) in 23S rRNA + S-adenosyl-L-methionine = 2'-O-methyluridine(2552) in 23S rRNA + S-adenosyl-L-homocysteine + H(+). Its function is as follows. Specifically methylates the uridine in position 2552 of 23S rRNA at the 2'-O position of the ribose in the fully assembled 50S ribosomal subunit. This chain is Ribosomal RNA large subunit methyltransferase E, found in Serratia proteamaculans (strain 568).